Reading from the N-terminus, the 119-residue chain is Holo-[acyl-carrier-protein] synthase (119 aa).

Mg(2+)-binding residues include D7 and E53.

It belongs to the P-Pant transferase superfamily. AcpS family. Mg(2+) is required as a cofactor.

It is found in the cytoplasm. The enzyme catalyses apo-[ACP] + CoA = holo-[ACP] + adenosine 3',5'-bisphosphate + H(+). Its function is as follows. Transfers the 4'-phosphopantetheine moiety from coenzyme A to a Ser of acyl-carrier-protein. The polypeptide is Holo-[acyl-carrier-protein] synthase (Dehalococcoides mccartyi (strain ATCC BAA-2266 / KCTC 15142 / 195) (Dehalococcoides ethenogenes (strain 195))).